The following is a 292-amino-acid chain: UPF0696 protein C11orf68 (292 aa).

Positions 1–11 (MAAAAAAAVAG) are enriched in low complexity. Residues 1–60 (MAAAAAAAVAGVGRGGGGAEPRQERSRARGWAGVERSEGRRMEPGEELEEEGSPGGREDG) form a disordered region. Omega-N-methylarginine is present on Arg29. Over residues 35 to 44 (ERSEGRRMEP) the composition is skewed to basic and acidic residues.

It belongs to the UPF0696 family.

The protein is UPF0696 protein C11orf68 (C11orf68) of Homo sapiens (Human).